Here is a 380-residue protein sequence, read N- to C-terminus: Flap endonuclease 1 (380 aa).

Positions methionine 1 to arginine 104 are N-domain. Residue aspartate 34 coordinates Mg(2+). DNA-binding residues include arginine 47 and arginine 70. The Mg(2+) site is built by aspartate 86, glutamate 158, glutamate 160, aspartate 179, and aspartate 181. Residues asparagine 122–histidine 253 form an I-domain region. Glutamate 158 provides a ligand contact to DNA. DNA is bound by residues glycine 231 and aspartate 233. Residue aspartate 233 coordinates Mg(2+). The segment at lysine 327–lysine 380 is disordered. Positions arginine 332–serine 351 are enriched in polar residues. Residues threonine 336 to phenylalanine 344 form an interaction with PCNA region.

It belongs to the XPG/RAD2 endonuclease family. FEN1 subfamily. As to quaternary structure, interacts with PCNA. Three molecules of fen1 bind to one PCNA trimer with each molecule binding to one PCNA monomer. PCNA stimulates the nuclease activity without altering cleavage specificity. Requires Mg(2+) as cofactor. Post-translationally, phosphorylated. Phosphorylation upon DNA damage induces relocalization to the nuclear plasma.

Its subcellular location is the nucleus. The protein resides in the nucleolus. It is found in the nucleoplasm. The protein localises to the mitochondrion. In terms of biological role, structure-specific nuclease with 5'-flap endonuclease and 5'-3' exonuclease activities involved in DNA replication and repair. During DNA replication, cleaves the 5'-overhanging flap structure that is generated by displacement synthesis when DNA polymerase encounters the 5'-end of a downstream Okazaki fragment. It enters the flap from the 5'-end and then tracks to cleave the flap base, leaving a nick for ligation. Also involved in the long patch base excision repair (LP-BER) pathway, by cleaving within the apurinic/apyrimidinic (AP) site-terminated flap. Acts as a genome stabilization factor that prevents flaps from equilibrating into structures that lead to duplications and deletions. Also possesses 5'-3' exonuclease activity on nicked or gapped double-stranded DNA, and exhibits RNase H activity. Also involved in replication and repair of rDNA and in repairing mitochondrial DNA. The sequence is that of Flap endonuclease 1 (fen1) from Xiphophorus maculatus (Southern platyfish).